A 499-amino-acid chain; its full sequence is Putative lipase atg15 (499 aa).

Residues 1 to 9 (MSIGEVSDS) are Cytoplasmic-facing. Residues 10–30 (AGHLASLVLPIEVAPIAPLIP) form a helical; Signal-anchor for type II membrane protein membrane-spanning segment. Residues 31–499 (EPPATAEHIF…PDSPERNEEM (469 aa)) are Lumenal-facing. Asparagine 170, asparagine 191, asparagine 192, asparagine 250, and asparagine 274 each carry an N-linked (GlcNAc...) asparagine glycan. Serine 290 acts as the Charge relay system in catalysis. The N-linked (GlcNAc...) asparagine glycan is linked to asparagine 436. The disordered stretch occupies residues 436–499 (NGTETTTTSS…PDSPERNEEM (64 aa)). Low complexity predominate over residues 438–454 (TETTTTSSAPTTTSISR).

This sequence belongs to the AB hydrolase superfamily. Lipase family. Binds to both phosphatidylinositol (PI) and phosphatidylinositol 3,5-bisphosphate (PIP2).

It is found in the endosome. It localises to the multivesicular body membrane. The protein localises to the prevacuolar compartment membrane. It carries out the reaction a triacylglycerol + H2O = a diacylglycerol + a fatty acid + H(+). Functionally, lipase which is essential for lysis of subvacuolar cytoplasm to vacuole targeted bodies and intravacuolar autophagic bodies. Involved in the lysis of intravacuolar multivesicular body (MVB) vesicles. The intravacuolar membrane disintegration by atg15 is critical to life span extension. The protein is Putative lipase atg15 (atg15) of Chaetomium globosum (strain ATCC 6205 / CBS 148.51 / DSM 1962 / NBRC 6347 / NRRL 1970) (Soil fungus).